The primary structure comprises 696 residues: D-(-)-3-hydroxybutyrate oligomer hydrolase (696 aa).

Residues 1-20 (MTRLGWGRRMVFGAALAAVA) form the signal peptide. Catalysis depends on serine 309, which acts as the Charge relay system.

Belongs to the D-(-)-3-hydroxybutyrate oligomer hydrolase family.

Its subcellular location is the secreted. The catalysed reaction is (3R)-hydroxybutanoate dimer + H2O = 2 (R)-3-hydroxybutanoate + H(+). The protein operates within lipid metabolism; butanoate metabolism. Participates in the degradation of poly-3-hydroxybutyrate (PHB). It works downstream of poly(3-hydroxybutyrate) depolymerase, hydrolyzing D(-)-3-hydroxybutyrate oligomers of various length (3HB-oligomers) into 3HB-monomers. This is D-(-)-3-hydroxybutyrate oligomer hydrolase from Burkholderia lata (strain ATCC 17760 / DSM 23089 / LMG 22485 / NCIMB 9086 / R18194 / 383).